Here is an 821-residue protein sequence, read N- to C-terminus: Ent-pimara-8(14),15-diene synthase (821 aa).

5 residues coordinate Mg(2+): D556, D560, N701, T705, and E709. The DDXXD motif motif lies at 556-560 (DDFFD).

It belongs to the terpene synthase family. It depends on Mg(2+) as a cofactor. Highly expressed in roots, at intermediate levels in stems and at lower levels in leaves.

The enzyme catalyses ent-copalyl diphosphate = ent-pimara-8(14),15-diene + diphosphate. The protein operates within secondary metabolite biosynthesis; terpenoid biosynthesis. Functionally, involved in the biosynthesis of ent-kaurene diterpenoids natural products. Catalyzes the conversion of ent-copalyl diphosphate to ent-pimara-8(14),15-diene. This Oryza sativa subsp. japonica (Rice) protein is Ent-pimara-8(14),15-diene synthase.